The primary structure comprises 458 residues: UPF0210 protein MmarC6_1246 (458 aa).

It belongs to the UPF0210 family.

This chain is UPF0210 protein MmarC6_1246, found in Methanococcus maripaludis (strain C6 / ATCC BAA-1332).